The following is a 284-amino-acid chain: Bifunctional protein FolD (284 aa).

166 to 168 provides a ligand contact to NADP(+); it reads GAS.

It belongs to the tetrahydrofolate dehydrogenase/cyclohydrolase family. As to quaternary structure, homodimer.

The catalysed reaction is (6R)-5,10-methylene-5,6,7,8-tetrahydrofolate + NADP(+) = (6R)-5,10-methenyltetrahydrofolate + NADPH. The enzyme catalyses (6R)-5,10-methenyltetrahydrofolate + H2O = (6R)-10-formyltetrahydrofolate + H(+). It functions in the pathway one-carbon metabolism; tetrahydrofolate interconversion. Its function is as follows. Catalyzes the oxidation of 5,10-methylenetetrahydrofolate to 5,10-methenyltetrahydrofolate and then the hydrolysis of 5,10-methenyltetrahydrofolate to 10-formyltetrahydrofolate. The polypeptide is Bifunctional protein FolD (Nitrosococcus oceani (strain ATCC 19707 / BCRC 17464 / JCM 30415 / NCIMB 11848 / C-107)).